A 155-amino-acid polypeptide reads, in one-letter code: F-box only protein 48 (155 aa).

The tract at residues 1–27 (MHKNSKRNNNLRVSHTEANSVDAEKEK) is disordered. Over residues 7–19 (RNNNLRVSHTEAN) the composition is skewed to polar residues. Positions 32–79 (NNFFELLPAEITFKIFSQLDIRSLCRASLTCRSWNDTIRNSDSLWKPH) constitute an F-box domain.

This is F-box only protein 48 (FBXO48) from Homo sapiens (Human).